The sequence spans 416 residues: (S)-ureidoglycine--glyoxylate transaminase (416 aa).

Lys-198 carries the N6-(pyridoxal phosphate)lysine modification.

The protein belongs to the class-V pyridoxal-phosphate-dependent aminotransferase family. In terms of assembly, homodimer. Pyridoxal 5'-phosphate is required as a cofactor.

The catalysed reaction is (S)-2-ureidoglycine + glyoxylate = N-carbamoyl-2-oxoglycine + glycine. Its pathway is nitrogen metabolism; (S)-allantoin degradation. Catalyzes the transamination between an unstable intermediate ((S)-ureidoglycine) and the end product of purine catabolism (glyoxylate) to yield oxalurate and glycine. Glyoxylate is the preferred substrate, but other amino-group acceptors can be used. In Bacillus subtilis (strain 168), this protein is (S)-ureidoglycine--glyoxylate transaminase.